Reading from the N-terminus, the 87-residue chain is Small ribosomal subunit protein bS20 (87 aa).

A disordered region spans residues 1-26 (MANIKSAKKRAIQSEKARKHNASRRS).

Belongs to the bacterial ribosomal protein bS20 family.

Functionally, binds directly to 16S ribosomal RNA. This chain is Small ribosomal subunit protein bS20, found in Escherichia coli O17:K52:H18 (strain UMN026 / ExPEC).